The sequence spans 685 residues: Mannan-binding lectin serine protease 2 (685 aa).

Residues 1–19 form the signal peptide; it reads MRLLIVLGLLWSLVATLLG. One can recognise a CUB 1 domain in the interval 20-137; it reads SKWPEPVFGR…TGFEAFYAAE (118 aa). The Ca(2+) site is built by E67 and D75. The cysteines at positions 72 and 90 are disulfide-linked. An N-linked (GlcNAc...) asparagine glycan is attached at N103. Residues D120, S122, N123, D138, and V139 each coordinate Ca(2+). The region spanning 138–181 is the EGF-like; calcium-binding domain; sequence DVDECRTSLGDSVPCDHYCHNYLGGYYCSCRVGYILHQNKHTCS. Cystine bridges form between C152-C165, C167-C180, C184-C211, and C241-C259. (3R)-3-hydroxyasparagine is present on N158. Y159 and G162 together coordinate Ca(2+). The region spanning 184–296 is the CUB 2 domain; sequence CSGQVFTGRS…TGWKIHYTST (113 aa). N285 carries an N-linked (GlcNAc...) asparagine glycan. 2 Sushi domains span residues 298–363 and 364–431; these read QPCP…ECSI and IDCG…VCKP. 7 disulfide bridges follow: C300-C348, C328-C361, C366-C411, C396-C429, C433-C551, C597-C617, and C628-C659. Positions 444-683 constitute a Peptidase S1 domain; that stretch reads IIGGQPAKPG…YIPWIENIIN (240 aa). Residues H482 and D531 each act as charge relay system in the active site. The Charge relay system role is filled by S632. N641 is a glycosylation site (N-linked (GlcNAc...) asparagine).

The protein belongs to the peptidase S1 family. In terms of assembly, homodimer; disulfide-linked. Binds MBL2. Isoform 2 binds to MASP1. Binds SERPING1. In terms of processing, N-glycosylated. Post-translationally, the iron and 2-oxoglutarate dependent 3-hydroxylation of aspartate and asparagine is (R) stereospecific within EGF domains. Highly expressed in liver. Secreted in plasma.

It is found in the secreted. The enzyme catalyses Selective cleavage after Arg-223 in complement component C2 (-Ser-Leu-Gly-Arg-|-Lys-Ile-Gln-Ile) and after Arg-76 in complement component C4 (-Gly-Leu-Gln-Arg-|-Ala-Leu-Glu-Ile).. Functionally, serum protease that plays an important role in the activation of the complement system via mannose-binding lectin. After activation by auto-catalytic cleavage it cleaves C2 and C4, leading to their activation and to the formation of C3 convertase. This chain is Mannan-binding lectin serine protease 2 (Masp2), found in Rattus norvegicus (Rat).